The sequence spans 713 residues: Glutamine--fructose-6-phosphate aminotransferase [isomerizing] (713 aa).

C2 acts as the For GATase activity in catalysis. Residues 2-316 (CGIFGYVNFL…DDDIAHIYDG (315 aa)) form the Glutamine amidotransferase type-2 domain. 2 consecutive SIS domains span residues 389 to 528 (WLST…DSIS) and 561 to 703 (CNSS…VDFP).

In terms of assembly, homotetramer.

It carries out the reaction D-fructose 6-phosphate + L-glutamine = D-glucosamine 6-phosphate + L-glutamate. It participates in nucleotide-sugar biosynthesis; UDP-N-acetyl-alpha-D-glucosamine biosynthesis; alpha-D-glucosamine 6-phosphate from D-fructose 6-phosphate: step 1/1. Involved in amino sugar synthesis (formation of chitin, supplies the amino sugars of asparagine-linked oligosaccharides of glycoproteins). This Candida albicans (strain SC5314 / ATCC MYA-2876) (Yeast) protein is Glutamine--fructose-6-phosphate aminotransferase [isomerizing] (GFA1).